The chain runs to 119 residues: Holo-[acyl-carrier-protein] synthase (119 aa).

Mg(2+) contacts are provided by Asp8 and Glu58.

The protein belongs to the P-Pant transferase superfamily. AcpS family. Requires Mg(2+) as cofactor.

The protein resides in the cytoplasm. It catalyses the reaction apo-[ACP] + CoA = holo-[ACP] + adenosine 3',5'-bisphosphate + H(+). Functionally, transfers the 4'-phosphopantetheine moiety from coenzyme A to a Ser of acyl-carrier-protein. The protein is Holo-[acyl-carrier-protein] synthase of Streptococcus thermophilus (strain ATCC BAA-491 / LMD-9).